The chain runs to 601 residues: NAD-dependent malic enzyme 59 kDa isoform, mitochondrial (601 aa).

The transit peptide at 1 to 18 (MWRVARSAASTFRRTRRL) directs the protein to the mitochondrion. Catalysis depends on Tyr129, which acts as the Proton donor. Position 182 (Arg182) interacts with NAD(+). Lys200 (proton acceptor) is an active-site residue. 3 residues coordinate a divalent metal cation: Glu271, Asp272, and Asp295. Positions 295 and 444 each coordinate NAD(+).

Belongs to the malic enzymes family. In terms of assembly, heterodimer of two related subunits. Requires Mg(2+) as cofactor. Mn(2+) is required as a cofactor.

It is found in the mitochondrion matrix. It catalyses the reaction (S)-malate + NAD(+) = pyruvate + CO2 + NADH. This is NAD-dependent malic enzyme 59 kDa isoform, mitochondrial from Solanum tuberosum (Potato).